A 169-amino-acid polypeptide reads, in one-letter code: Peptide methionine sulfoxide reductase MsrA (169 aa).

Residue Cys-10 is part of the active site.

The protein belongs to the MsrA Met sulfoxide reductase family.

The enzyme catalyses L-methionyl-[protein] + [thioredoxin]-disulfide + H2O = L-methionyl-(S)-S-oxide-[protein] + [thioredoxin]-dithiol. The catalysed reaction is [thioredoxin]-disulfide + L-methionine + H2O = L-methionine (S)-S-oxide + [thioredoxin]-dithiol. Its function is as follows. Has an important function as a repair enzyme for proteins that have been inactivated by oxidation. Catalyzes the reversible oxidation-reduction of methionine sulfoxide in proteins to methionine. The protein is Peptide methionine sulfoxide reductase MsrA of Streptococcus equi subsp. zooepidemicus (strain MGCS10565).